Reading from the N-terminus, the 231-residue chain is 7-cyano-7-deazaguanine synthase (231 aa).

8 to 18 contacts ATP; sequence FSGGQDSTTCL. The Zn(2+) site is built by C188, C197, C200, and C203.

This sequence belongs to the QueC family. The cofactor is Zn(2+).

The catalysed reaction is 7-carboxy-7-deazaguanine + NH4(+) + ATP = 7-cyano-7-deazaguanine + ADP + phosphate + H2O + H(+). The protein operates within purine metabolism; 7-cyano-7-deazaguanine biosynthesis. Catalyzes the ATP-dependent conversion of 7-carboxy-7-deazaguanine (CDG) to 7-cyano-7-deazaguanine (preQ(0)). This Salmonella schwarzengrund (strain CVM19633) protein is 7-cyano-7-deazaguanine synthase.